A 375-amino-acid polypeptide reads, in one-letter code: 1-deoxy-D-xylulose 5-phosphate reductoisomerase (375 aa).

NADPH contacts are provided by Thr-10, Gly-11, Ser-12, Val-13, Lys-37, and Asn-114. A 1-deoxy-D-xylulose 5-phosphate-binding site is contributed by Lys-115. An NADPH-binding site is contributed by Glu-116. Asp-136 provides a ligand contact to Mn(2+). Residues Ser-137, Glu-138, Ser-162, and His-185 each coordinate 1-deoxy-D-xylulose 5-phosphate. Glu-138 is a Mn(2+) binding site. Gly-191 is a binding site for NADPH. Positions 198, 203, 204, and 207 each coordinate 1-deoxy-D-xylulose 5-phosphate. Glu-207 is a binding site for Mn(2+).

Belongs to the DXR family. Requires Mg(2+) as cofactor. It depends on Mn(2+) as a cofactor.

It catalyses the reaction 2-C-methyl-D-erythritol 4-phosphate + NADP(+) = 1-deoxy-D-xylulose 5-phosphate + NADPH + H(+). The protein operates within isoprenoid biosynthesis; isopentenyl diphosphate biosynthesis via DXP pathway; isopentenyl diphosphate from 1-deoxy-D-xylulose 5-phosphate: step 1/6. In terms of biological role, catalyzes the NADPH-dependent rearrangement and reduction of 1-deoxy-D-xylulose-5-phosphate (DXP) to 2-C-methyl-D-erythritol 4-phosphate (MEP). This chain is 1-deoxy-D-xylulose 5-phosphate reductoisomerase, found in Sulfurihydrogenibium sp. (strain YO3AOP1).